Reading from the N-terminus, the 246-residue chain is Triosephosphate isomerase (246 aa).

9–11 is a binding site for substrate; that stretch reads NWK. The active-site Electrophile is the His-99. The active-site Proton acceptor is the Glu-168. Substrate is bound by residues Gly-174, Ser-207, and 228–229; that span reads GG.

Belongs to the triosephosphate isomerase family. As to quaternary structure, homodimer.

The protein localises to the cytoplasm. It catalyses the reaction D-glyceraldehyde 3-phosphate = dihydroxyacetone phosphate. It functions in the pathway carbohydrate biosynthesis; gluconeogenesis. It participates in carbohydrate degradation; glycolysis; D-glyceraldehyde 3-phosphate from glycerone phosphate: step 1/1. Involved in the gluconeogenesis. Catalyzes stereospecifically the conversion of dihydroxyacetone phosphate (DHAP) to D-glyceraldehyde-3-phosphate (G3P). The chain is Triosephosphate isomerase from Prochlorococcus marinus (strain NATL1A).